Consider the following 613-residue polypeptide: Serine/threonine-protein kinase pkpA (613 aa).

Positions 17-269 constitute a Protein kinase domain; that stretch reads SKLNTVLGKG…AQEILEHRFL (253 aa). Residues 23–31 and Lys-50 contribute to the ATP site; that span reads LGKGAYKVV. The Proton acceptor role is filled by Asp-140. 2 disordered regions span residues 424–475 and 589–613; these read LQPQ…STML and VTQR…QELM. The span at 427–441 shows a compositional bias: pro residues; it reads QPQPQPQPQPQPQPQ. The segment covering 442 to 475 has biased composition (low complexity); the sequence is PQFQLQPQLQYLSPQSTTSPGPTSDDNSTNSTML. The segment covering 592–602 has biased composition (polar residues); sequence RGLQGTRSGAS.

This sequence belongs to the protein kinase superfamily. Ser/Thr protein kinase family.

The enzyme catalyses L-seryl-[protein] + ATP = O-phospho-L-seryl-[protein] + ADP + H(+). It catalyses the reaction L-threonyl-[protein] + ATP = O-phospho-L-threonyl-[protein] + ADP + H(+). Its function is as follows. Serine/threonine protein kinase that probably participates as an intermediate in an intracellular system controlling nuclear proliferation. The protein is Serine/threonine-protein kinase pkpA (pkpA) of Phycomyces blakesleeanus (strain ATCC 8743b / DSM 1359 / FGSC 10004 / NBRC 33097 / NRRL 1555).